We begin with the raw amino-acid sequence, 150 residues long: Ribonuclease HI (150 aa).

Residues methionine 1–aspartate 142 form the RNase H type-1 domain. Aspartate 10, glutamate 48, aspartate 70, and aspartate 134 together coordinate Mg(2+).

Belongs to the RNase H family. Monomer. The cofactor is Mg(2+).

It is found in the cytoplasm. It carries out the reaction Endonucleolytic cleavage to 5'-phosphomonoester.. Functionally, endonuclease that specifically degrades the RNA of RNA-DNA hybrids. This chain is Ribonuclease HI, found in Pseudomonas syringae pv. tomato (strain ATCC BAA-871 / DC3000).